The sequence spans 368 residues: Cytochrome b-c1 complex subunit 2, mitochondrial (368 aa).

The N-terminal 16 residues, 1–16 (MLSAARLQFAQGSVRR), are a transit peptide targeting the mitochondrion. A phosphoserine mark is found at Ser-141 and Ser-168.

The protein belongs to the peptidase M16 family. UQCRC2/QCR2 subfamily. Component of the ubiquinol-cytochrome c oxidoreductase (cytochrome b-c1 complex, complex III, CIII), a multisubunit enzyme composed of 10 subunits. The complex is composed of 3 respiratory subunits cytochrome b (COB), cytochrome c1 (CYT1) and Rieske protein (RIP1), 2 core protein subunits COR1 and QCR2, and 5 low-molecular weight protein subunits QCR6, QCR7, QCR8, QCR9 and QCR10. The complex exists as an obligatory dimer and forms supercomplexes (SCs) in the inner mitochondrial membrane with a monomer or a dimer of cytochrome c oxidase (complex IV, CIV), resulting in 2 different assemblies (supercomplexes III(2)IV and III(2)IV(2)).

It localises to the mitochondrion inner membrane. Its function is as follows. Component of the ubiquinol-cytochrome c oxidoreductase, a multisubunit transmembrane complex that is part of the mitochondrial electron transport chain which drives oxidative phosphorylation. The respiratory chain contains 3 multisubunit complexes succinate dehydrogenase (complex II, CII), ubiquinol-cytochrome c oxidoreductase (cytochrome b-c1 complex, complex III, CIII) and cytochrome c oxidase (complex IV, CIV), that cooperate to transfer electrons derived from NADH and succinate to molecular oxygen, creating an electrochemical gradient over the inner membrane that drives transmembrane transport and the ATP synthase. The cytochrome b-c1 complex catalyzes electron transfer from ubiquinol to cytochrome c, linking this redox reaction to translocation of protons across the mitochondrial inner membrane, with protons being carried across the membrane as hydrogens on the quinol. In the process called Q cycle, 2 protons are consumed from the matrix, 4 protons are released into the intermembrane space and 2 electrons are passed to cytochrome c. The protein is Cytochrome b-c1 complex subunit 2, mitochondrial (QCR2) of Saccharomyces cerevisiae (strain ATCC 204508 / S288c) (Baker's yeast).